We begin with the raw amino-acid sequence, 491 residues long: uncharacterized protein (491 aa).

The PE domain maps to M1–I92. Disordered regions lie at residues P114 to A156, A376 to G400, and A419 to G491. Residues G128 to G145 show a composition bias toward gly residues. The span at G432–L480 shows a compositional bias: gly residues.

The protein belongs to the mycobacterial PE family. PGRS subfamily.

This is an uncharacterized protein from Mycobacterium bovis (strain ATCC BAA-935 / AF2122/97).